Reading from the N-terminus, the 159-residue chain is Galactose-specific lectin nattectin (159 aa).

The signal sequence occupies residues 1–21 (MASVPHFTVFLFLACALGIGA). Positions 22–24 (NVT) are excised as a propeptide. Cystine bridges form between C31–C42, C59–C155, and C132–C147. A C-type lectin domain is found at 38 to 156 (HGSRCFTFHR…CKVKRSFLCA (119 aa)). Residues Q122, D124, E130, and N143 each coordinate Ca(2+). Positions 122-124 (QPD) match the Galactose-binding motif.

In terms of assembly, monomer. Post-translationally, not glycosylated. Expressed by the venom gland.

Its subcellular location is the secreted. Its function is as follows. Galactose specific lectin that exhibits hemagglutination activity (minimum hemagluttination concentration = 2.5 ug/well) in a calcium-independent fashion. Has remarkable pro-inflammatory activity, inducing neutrophil mobilization in mice. Plays a crucial role in the innate immune system and chronic manifestations, especially in neutrophil mobilization. This is Galactose-specific lectin nattectin from Thalassophryne nattereri (Copper Joe toadfish).